The sequence spans 135 residues: Sex-regulated protein janus-A (135 aa).

Lys-37 contacts substrate. His-63 acts as the Proton acceptor in catalysis. Substrate is bound at residue Ser-104–Gly-106.

Belongs to the janus family.

In terms of biological role, janA and janB regulate somatic sex differentiation. The polypeptide is Sex-regulated protein janus-A (janA) (Drosophila erecta (Fruit fly)).